Reading from the N-terminus, the 638-residue chain is Poly(A)-specific ribonuclease PARN (638 aa).

Residues Asp-28 and Glu-30 each contribute to the a divalent metal cation site. A disordered region spans residues 143 to 165 (REQYDEKRSQSNGAGALSYTSPN). The span at 152 to 165 (QSNGAGALSYTSPN) shows a compositional bias: polar residues. Phosphoserine is present on residues Ser-163 and Ser-167. In terms of domain architecture, R3H spans 178–245 (KKFIDQVVEK…ERYIVISKVD (68 aa)). N6-acetyllysine is present on Lys-220. A divalent metal cation is bound by residues Asp-292 and Asp-382. Lys-499 carries the N6-acetyllysine modification. Position 530 is a phosphoserine (Ser-530). Ser-557 is subject to Phosphoserine; by MAPKAPK2. The interval 573–638 (RAEAGLEARA…AKLFEVPDTW (66 aa)) is disordered. Phosphoserine is present on residues Ser-583 and Ser-587. Over residues 606 to 615 (KKAKKLKRMK) the composition is skewed to basic residues. Phosphoserine is present on residues Ser-619, Ser-623, and Ser-627.

Belongs to the CAF1 family. Homodimer. Found in a mRNA decay complex with RENT1, RENT2 and RENT3B. Interacts with KHSRP. Interacts with CELF1/CUGBP1. Interacts with ZC3HAV1 in an RNA-independent manner. Interacts with DHX36. Requires Mg(2+) as cofactor. Post-translationally, phosphorylation by MAPKAPK2, preventing GADD45A mRNA degradation after genotoxic stress.

It localises to the nucleus. It is found in the cytoplasm. Its subcellular location is the nucleolus. The enzyme catalyses Exonucleolytic cleavage of poly(A) to 5'-AMP.. Functionally, 3'-exoribonuclease that has a preference for poly(A) tails of mRNAs, thereby efficiently degrading poly(A) tails. Exonucleolytic degradation of the poly(A) tail is often the first step in the decay of eukaryotic mRNAs and is also used to silence certain maternal mRNAs translationally during oocyte maturation and early embryonic development. Involved in nonsense-mediated mRNA decay, a critical process of selective degradation of mRNAs that contain premature stop codons. Also involved in degradation of inherently unstable mRNAs that contain AU-rich elements (AREs) in their 3'-UTR, possibly via its interaction with KHSRP. Probably mediates the removal of poly(A) tails of AREs mRNAs, which constitutes the first step of destabilization. Interacts with both the 3'-end poly(A) tail and the 5'-end cap structure during degradation, the interaction with the cap structure being required for an efficient degradation of poly(A) tails. Also able to recognize poly(A) tails of microRNAs such as MIR21 and H/ACA box snoRNAs (small nucleolar RNAs) leading to microRNAs degradation or snoRNA increased stability. The chain is Poly(A)-specific ribonuclease PARN (PARN) from Bos taurus (Bovine).